A 254-amino-acid polypeptide reads, in one-letter code: Polysaccharide deacetylase domain-containing protein ECU11_0510 (254 aa).

The NodB homology domain occupies 26–210; the sequence is GMIAINFVDG…IGKDKGYRFV (185 aa).

This is Polysaccharide deacetylase domain-containing protein ECU11_0510 from Encephalitozoon cuniculi (strain GB-M1) (Microsporidian parasite).